Consider the following 133-residue polypeptide: NADPH-dependent 7-cyano-7-deazaguanine reductase (133 aa).

Cys-46 (thioimide intermediate) is an active-site residue. Residue Asp-53 is the Proton donor of the active site. Residues 68–70 and 87–88 contribute to the substrate site; these read VEL and HE.

The protein belongs to the GTP cyclohydrolase I family. QueF type 1 subfamily.

The protein resides in the cytoplasm. It catalyses the reaction 7-aminomethyl-7-carbaguanine + 2 NADP(+) = 7-cyano-7-deazaguanine + 2 NADPH + 3 H(+). Its pathway is tRNA modification; tRNA-queuosine biosynthesis. Catalyzes the NADPH-dependent reduction of 7-cyano-7-deazaguanine (preQ0) to 7-aminomethyl-7-deazaguanine (preQ1). The sequence is that of NADPH-dependent 7-cyano-7-deazaguanine reductase from Parasynechococcus marenigrum (strain WH8102).